A 560-amino-acid polypeptide reads, in one-letter code: Membrane protein insertase YidC (560 aa).

The next 6 membrane-spanning stretches (helical) occupy residues 5–25, 334–354, 357–377, 431–451, 476–496, and 522–542; these read IINLIAAVVLSLSIIFGWQYF, AIDFGWFYIITKPVFYAMNFF, YVGNFGISILIVTVIIKLLMF, LPILVQIPVFFSIYKVLYVTI, LFGLLPFAPPSFLMIGAWPIL, and FMPLIFLFMFSSFPVGLLIYW.

The protein belongs to the OXA1/ALB3/YidC family. Type 1 subfamily. Interacts with the Sec translocase complex via SecD. Specifically interacts with transmembrane segments of nascent integral membrane proteins during membrane integration.

The protein localises to the cell inner membrane. Its function is as follows. Required for the insertion and/or proper folding and/or complex formation of integral membrane proteins into the membrane. Involved in integration of membrane proteins that insert both dependently and independently of the Sec translocase complex, as well as at least some lipoproteins. Aids folding of multispanning membrane proteins. The protein is Membrane protein insertase YidC of Rickettsia prowazekii (strain Madrid E).